A 450-amino-acid chain; its full sequence is Ribosomal protein uS12 methylthiotransferase RimO (450 aa).

One can recognise an MTTase N-terminal domain in the interval 10 to 125 (SRIALVSLGC…VVDIVRRAAT (116 aa)). C19, C54, C88, C162, C166, and C169 together coordinate [4Fe-4S] cluster. The Radical SAM core domain maps to 148 to 378 (SGSPFTAYLK…AAVQREVSRA (231 aa)). The TRAM domain maps to 381–447 (RARVGSEVTV…PYDLRARVLS (67 aa)).

Belongs to the methylthiotransferase family. RimO subfamily. [4Fe-4S] cluster is required as a cofactor.

It localises to the cytoplasm. It catalyses the reaction L-aspartate(89)-[ribosomal protein uS12]-hydrogen + (sulfur carrier)-SH + AH2 + 2 S-adenosyl-L-methionine = 3-methylsulfanyl-L-aspartate(89)-[ribosomal protein uS12]-hydrogen + (sulfur carrier)-H + 5'-deoxyadenosine + L-methionine + A + S-adenosyl-L-homocysteine + 2 H(+). In terms of biological role, catalyzes the methylthiolation of an aspartic acid residue of ribosomal protein uS12. In Desulforudis audaxviator (strain MP104C), this protein is Ribosomal protein uS12 methylthiotransferase RimO.